The sequence spans 188 residues: Ion-translocating oxidoreductase complex subunit B (188 aa).

A hydrophobic region spans residues 1–23 (MIEAAVSMSALGLGLGLLLGVAA). The 60-residue stretch at 29 to 88 (ESPPILDAIEGILPGTNCGACGYPGCRGLAEAMSEGAAPVTACAPGGRDVALALAAIVET) folds into the 4Fe-4S domain. Residues Cys-46, Cys-49, Cys-54, Cys-71, Cys-113, Cys-116, Cys-119, Cys-123, Cys-143, Cys-146, Cys-149, and Cys-153 each coordinate [4Fe-4S] cluster. 4Fe-4S ferredoxin-type domains lie at 104-133 (TVAF…GANR) and 134-163 (QIHT…ARVK).

The protein belongs to the 4Fe4S bacterial-type ferredoxin family. RnfB subfamily. In terms of assembly, the complex is composed of six subunits: RnfA, RnfB, RnfC, RnfD, RnfE and RnfG. [4Fe-4S] cluster serves as cofactor.

It localises to the cellular chromatophore membrane. Functionally, part of a membrane-bound complex that couples electron transfer with translocation of ions across the membrane. This Cereibacter sphaeroides (strain ATCC 17029 / ATH 2.4.9) (Rhodobacter sphaeroides) protein is Ion-translocating oxidoreductase complex subunit B.